The primary structure comprises 302 residues: Endochitinase 4 (302 aa).

A signal peptide spans 1-18; the sequence is EFTALSLLFSLLLLTASA. Residues 19-60 enclose the Chitin-binding type-1 domain; the sequence is EQCGKQAGGARCAAGLCCSNFGWCGNTNDYCGPGKCQSQCPS. Intrachain disulfides connect Cys-21-Cys-36, Cys-30-Cys-42, Cys-35-Cys-49, and Cys-54-Cys-58. The disordered stretch occupies residues 59-79; the sequence is PSGPSPKPPTPGPGPSGGDIG. Over residues 61-72 the composition is skewed to pro residues; that stretch reads GPSPKPPTPGPG. The Proton donor role is filled by Glu-144. Cys-162 and Cys-182 form a disulfide bridge.

This sequence belongs to the glycosyl hydrolase 19 family. Chitinase class I subfamily.

Its subcellular location is the vacuole. It carries out the reaction Random endo-hydrolysis of N-acetyl-beta-D-glucosaminide (1-&gt;4)-beta-linkages in chitin and chitodextrins.. Defense against chitin-containing fungal pathogens. The sequence is that of Endochitinase 4 (CHTB4) from Solanum tuberosum (Potato).